Here is a 347-residue protein sequence, read N- to C-terminus: Isopentenyl-diphosphate delta-isomerase (347 aa).

9–10 contributes to the substrate binding site; that stretch reads RK. Residues Ser67, 68–70, Ser98, and Asn127 each bind FMN; that span reads SMT. 98–100 provides a ligand contact to substrate; that stretch reads SQR. Substrate is bound at residue Gln162. Glu163 provides a ligand contact to Mg(2+). FMN-binding positions include Lys194, Thr224, 274–276, and 295–296; these read GIK and AA.

The protein belongs to the IPP isomerase type 2 family. In terms of assembly, homooctamer. Dimer of tetramers. Requires FMN as cofactor. NADPH serves as cofactor. Mg(2+) is required as a cofactor.

The protein localises to the cytoplasm. It catalyses the reaction isopentenyl diphosphate = dimethylallyl diphosphate. In terms of biological role, involved in the biosynthesis of isoprenoids. Catalyzes the 1,3-allylic rearrangement of the homoallylic substrate isopentenyl (IPP) to its allylic isomer, dimethylallyl diphosphate (DMAPP). The protein is Isopentenyl-diphosphate delta-isomerase of Pseudescherichia vulneris (Escherichia vulneris).